The following is a 127-amino-acid chain: Large ribosomal subunit protein uL24 (127 aa).

The protein belongs to the universal ribosomal protein uL24 family. Part of the 50S ribosomal subunit.

Functionally, one of two assembly initiator proteins, it binds directly to the 5'-end of the 23S rRNA, where it nucleates assembly of the 50S subunit. Its function is as follows. One of the proteins that surrounds the polypeptide exit tunnel on the outside of the subunit. The chain is Large ribosomal subunit protein uL24 from Leptospira biflexa serovar Patoc (strain Patoc 1 / ATCC 23582 / Paris).